The primary structure comprises 1141 residues: DNA-directed RNA polymerase subunit beta (1141 aa).

The protein belongs to the RNA polymerase beta chain family. As to quaternary structure, the RNAP catalytic core consists of 2 alpha, 1 beta, 1 beta' and 1 omega subunit. When a sigma factor is associated with the core the holoenzyme is formed, which can initiate transcription.

It catalyses the reaction RNA(n) + a ribonucleoside 5'-triphosphate = RNA(n+1) + diphosphate. Its function is as follows. DNA-dependent RNA polymerase catalyzes the transcription of DNA into RNA using the four ribonucleoside triphosphates as substrates. The sequence is that of DNA-directed RNA polymerase subunit beta from Frankia casuarinae (strain DSM 45818 / CECT 9043 / HFP020203 / CcI3).